The primary structure comprises 195 residues: Dehydrin DHN1 (195 aa).

The tract at residues 1–195 is disordered; the sequence is MAEYGDQYGR…IKEKLPGGHH (195 aa). Residues 37-48 are compositionally biased toward low complexity; the sequence is YGTTGTTVGYGT. The segment covering 50-64 has biased composition (polar residues); sequence QCVTTVTTGAQKTDQ. The segment covering 65–88 has biased composition (low complexity); it reads YGTPGTTGAYGTDQYGTTGTTGEY. Basic and acidic residues-rich tracts occupy residues 136 to 153 and 173 to 195; these read KEKI…DDQT and SPEH…GGHH.

It belongs to the plant dehydrin family. Phosphorylated in vitro by CK2. In terms of tissue distribution, expressed in roots and leaves.

It is found in the cytoplasm. It localises to the nucleus. The chain is Dehydrin DHN1 from Avicennia marina (Grey mangrove).